The primary structure comprises 388 residues: 3beta-hydroxysteroid dehydrogenase dhs-16 (388 aa).

A helical membrane pass occupies residues 2 to 22; it reads LELIYILPLLCFVYFLFRRFV. Tyrosine 188 functions as the Proton acceptor in the catalytic mechanism. The next 2 helical transmembrane spans lie at 300–320 and 346–366; these read AIFM…WILA and IQWI…TIFF.

The protein belongs to the short-chain dehydrogenases/reductases (SDR) family. In terms of tissue distribution, strongly expressed in the hypodermis and posterior pharyngeal bulb and in a number of unidentified neurons of the head and tail.

Its subcellular location is the membrane. It carries out the reaction lathosterol + NAD(+) = 5alpha-cholest-7-en-3-one + NADH + H(+). It functions in the pathway steroid hormone biosynthesis; dafachronic acid biosynthesis. Functionally, 3beta-hydroxysteroid dehydrogenase that converts 3beta-hydroxysteroids to 3-ketosteroids, an essential step in the production of dafachronic acids from cholesterol. Catalyzes the dehydrogenation of lathosterol (5alpha-cholest-7-en-3beta-ol) to lathosterone (5alpha-cholest-7-en-3-one), a step required for maximal biosynthesis of Delta(7)-dafachronic acid. Dafachronic acids act as ligands and bind directly to the nuclear hormone receptor (NHR) daf-12, suppressing dauer formation and inducing reproductive growth, they can also regulate C.elegans lifespan. The polypeptide is 3beta-hydroxysteroid dehydrogenase dhs-16 (dhs-16) (Caenorhabditis elegans).